The sequence spans 253 residues: MMKSGADLQFPPGFRFHPTDEELVLMYLCRKCASQPIPAPIITELDLYRYDPWDLPDMALYGEKEWYFFSPRDRKYPNGSRPNRAAGTGYWKATGADKPIGRPKPVGIKKALVFYSGKPPNGEKTNWIMHEYRLADVDRSVRKKNSLRLDDWVLCRIYNKKGVIEKRRSDIEDGLKPVTDTCPPESVARLISGSEQAVSPEFTCSNGRLSNALDFPFNYVDAIADNEIVSRLLGGNQMWSTTLDPLVVRQGTF.

The NAC domain maps to 10–160 (FPPGFRFHPT…DWVLCRIYNK (151 aa)). The DNA-binding element occupies 106 to 166 (VGIKKALVFY…IYNKKGVIEK (61 aa)).

Expressed in germinating seeds, roots, leaf veins, open flowers and silique stalks.

The protein resides in the nucleus. Transcriptional activator that positively regulates age-dependent senescence, dark-induced leaf senescence and stress-induced senescence. Regulates leaf senescence through the modulation of the expression of senescence-associated genes SGR1/NYE1, SAG113 and SAUR36/SAG201, which are involved in chlorophyll degradation, and abscisic acid (ABA) and auxin promotion of senescence, respectively. Promotes reactive oxygen species (ROS) production during age-dependent and stress-induced senescence. Positively regulates auxin-mediated responses in roots. Stress-responsive NAC transcription factor involved in ABA-inducible leaf senescence signaling. Required for normal seed development and morphology. This is NAC transcription factor 32 from Arabidopsis thaliana (Mouse-ear cress).